A 184-amino-acid chain; its full sequence is Peptide deformylase (184 aa).

Residues Cys-92 and His-134 each contribute to the Fe cation site. The active site involves Glu-135. His-138 contributes to the Fe cation binding site.

This sequence belongs to the polypeptide deformylase family. Fe(2+) serves as cofactor.

The catalysed reaction is N-terminal N-formyl-L-methionyl-[peptide] + H2O = N-terminal L-methionyl-[peptide] + formate. Removes the formyl group from the N-terminal Met of newly synthesized proteins. Requires at least a dipeptide for an efficient rate of reaction. N-terminal L-methionine is a prerequisite for activity but the enzyme has broad specificity at other positions. The polypeptide is Peptide deformylase (Psychrobacter arcticus (strain DSM 17307 / VKM B-2377 / 273-4)).